The sequence spans 346 residues: Holliday junction branch migration complex subunit RuvB (346 aa).

The large ATPase domain (RuvB-L) stretch occupies residues 2–183 (TDDRIIGAGA…FGIVQRLEFY (182 aa)). ATP is bound by residues isoleucine 22, arginine 23, glycine 64, lysine 67, threonine 68, threonine 69, 130 to 132 (EDF), arginine 173, tyrosine 183, and arginine 220. Threonine 68 is a binding site for Mg(2+). Residues 184–254 (SVEELTRIVR…VAQAAMKMLK (71 aa)) form a small ATPAse domain (RuvB-S) region. The head domain (RuvB-H) stretch occupies residues 257 to 346 (PEGFDELDRR…DLFAEVPDVG (90 aa)). Residues arginine 293, arginine 312, and arginine 317 each coordinate DNA.

It belongs to the RuvB family. Homohexamer. Forms an RuvA(8)-RuvB(12)-Holliday junction (HJ) complex. HJ DNA is sandwiched between 2 RuvA tetramers; dsDNA enters through RuvA and exits via RuvB. An RuvB hexamer assembles on each DNA strand where it exits the tetramer. Each RuvB hexamer is contacted by two RuvA subunits (via domain III) on 2 adjacent RuvB subunits; this complex drives branch migration. In the full resolvosome a probable DNA-RuvA(4)-RuvB(12)-RuvC(2) complex forms which resolves the HJ.

The protein resides in the cytoplasm. The enzyme catalyses ATP + H2O = ADP + phosphate + H(+). Its function is as follows. The RuvA-RuvB-RuvC complex processes Holliday junction (HJ) DNA during genetic recombination and DNA repair, while the RuvA-RuvB complex plays an important role in the rescue of blocked DNA replication forks via replication fork reversal (RFR). RuvA specifically binds to HJ cruciform DNA, conferring on it an open structure. The RuvB hexamer acts as an ATP-dependent pump, pulling dsDNA into and through the RuvAB complex. RuvB forms 2 homohexamers on either side of HJ DNA bound by 1 or 2 RuvA tetramers; 4 subunits per hexamer contact DNA at a time. Coordinated motions by a converter formed by DNA-disengaged RuvB subunits stimulates ATP hydrolysis and nucleotide exchange. Immobilization of the converter enables RuvB to convert the ATP-contained energy into a lever motion, pulling 2 nucleotides of DNA out of the RuvA tetramer per ATP hydrolyzed, thus driving DNA branch migration. The RuvB motors rotate together with the DNA substrate, which together with the progressing nucleotide cycle form the mechanistic basis for DNA recombination by continuous HJ branch migration. Branch migration allows RuvC to scan DNA until it finds its consensus sequence, where it cleaves and resolves cruciform DNA. In Stenotrophomonas maltophilia (strain K279a), this protein is Holliday junction branch migration complex subunit RuvB.